The following is a 131-amino-acid chain: Biogenesis of lysosome-related organelles complex 1 subunit CNL1 (131 aa).

The interval 1–29 is disordered; sequence MSAPDSNSGHAHDSAQNEGAAEGTRDPFG. Positions 73–101 form a coiled coil; it reads DAIDINIEEMRRILQKCEELETHFDMLDQ.

It belongs to the BLOC1S4 family. Component of the biogenesis of lysosome-related organelles complex-1 (BLOC-1).

It localises to the cytoplasm. Component of the biogenesis of lysosome-related organelles complex-1 (BLOC-1), a complex that is involved in endosomal cargo sorting. The polypeptide is Biogenesis of lysosome-related organelles complex 1 subunit CNL1 (CLN1) (Lachancea thermotolerans (strain ATCC 56472 / CBS 6340 / NRRL Y-8284) (Yeast)).